We begin with the raw amino-acid sequence, 572 residues long: Potassium-transporting ATPase potassium-binding subunit (572 aa).

11 consecutive transmembrane segments (helical) span residues 5–25 (LAAG…YVPL), 71–91 (VGYT…LYVL), 97–117 (VLPL…NTAV), 142–162 (GLAV…VALI), 188–208 (ILLP…TIQS), 258–278 (PTPL…VCLT), 292–312 (LTVL…VTWA), 387–407 (GLYG…LLVG), 422–442 (ITMA…GTGI), 500–520 (LGMA…ALAG), and 548–568 (GTVL…GPIA).

This sequence belongs to the KdpA family. The system is composed of three essential subunits: KdpA, KdpB and KdpC.

The protein resides in the cell membrane. In terms of biological role, part of the high-affinity ATP-driven potassium transport (or Kdp) system, which catalyzes the hydrolysis of ATP coupled with the electrogenic transport of potassium into the cytoplasm. This subunit binds the extracellular potassium ions and delivers the ions to the membrane domain of KdpB through an intramembrane tunnel. In Mycobacteroides abscessus (strain ATCC 19977 / DSM 44196 / CCUG 20993 / CIP 104536 / JCM 13569 / NCTC 13031 / TMC 1543 / L948) (Mycobacterium abscessus), this protein is Potassium-transporting ATPase potassium-binding subunit.